Consider the following 136-residue polypeptide: Small ribosomal subunit protein bS6 (136 aa).

The segment at 99-136 is disordered; it reads QSEMLKAEENRSERRERRERPEHGGHEGLDGDSDKADE. A compositionally biased stretch (basic and acidic residues) spans 103–136; sequence LKAEENRSERRERRERPEHGGHEGLDGDSDKADE.

The protein belongs to the bacterial ribosomal protein bS6 family.

In terms of biological role, binds together with bS18 to 16S ribosomal RNA. In Azotobacter vinelandii (strain DJ / ATCC BAA-1303), this protein is Small ribosomal subunit protein bS6.